The primary structure comprises 1316 residues: Serine/threonine-protein kinase 36 (1316 aa).

One can recognise a Protein kinase domain in the interval 4-254 (YHVLEMIGEG…WPDLLHHPFI (251 aa)). ATP-binding positions include 10-18 (IGEGSFGRV) and lysine 33. Aspartate 125 (proton acceptor) is an active-site residue. Residues 389-418 (QGFPEPRPEAMGRQSTDVVDPENEEPDSDD) form a disordered region. Residues 407–418 (VDPENEEPDSDD) are compositionally biased toward acidic residues.

This sequence belongs to the protein kinase superfamily. Ser/Thr protein kinase family. Interacts with SPAG16 and KIF27. The cofactor is Mg(2+). As to expression, weakly expressed in the heart and thymus, present at moderate to high levels in the lungs, pancreas, and kidneys and at higher levels in the brain and cerebellum. Very highly expressed in the testis.

It localises to the cytoplasm. Its subcellular location is the nucleus. It is found in the cytoskeleton. The protein localises to the cilium axoneme. The enzyme catalyses L-seryl-[protein] + ATP = O-phospho-L-seryl-[protein] + ADP + H(+). It catalyses the reaction L-threonyl-[protein] + ATP = O-phospho-L-threonyl-[protein] + ADP + H(+). Serine/threonine protein kinase which plays an important role in the sonic hedgehog (Shh) pathway by regulating the activity of GLI transcription factors. Controls the activity of the transcriptional regulators GLI1, GLI2 and GLI3 by opposing the effect of SUFU and promoting their nuclear localization. GLI2 requires an additional function of STK36 to become transcriptionally active, but the enzyme does not need to possess an active kinase catalytic site for this to occur. Required for postnatal development, possibly by regulating the homeostasis of cerebral spinal fluid or ciliary function. Essential for construction of the central pair apparatus of motile cilia. The sequence is that of Serine/threonine-protein kinase 36 from Mus musculus (Mouse).